A 231-amino-acid polypeptide reads, in one-letter code: 2-C-methyl-D-erythritol 4-phosphate cytidylyltransferase (231 aa).

Belongs to the IspD/TarI cytidylyltransferase family. IspD subfamily.

It carries out the reaction 2-C-methyl-D-erythritol 4-phosphate + CTP + H(+) = 4-CDP-2-C-methyl-D-erythritol + diphosphate. Its pathway is isoprenoid biosynthesis; isopentenyl diphosphate biosynthesis via DXP pathway; isopentenyl diphosphate from 1-deoxy-D-xylulose 5-phosphate: step 2/6. Functionally, catalyzes the formation of 4-diphosphocytidyl-2-C-methyl-D-erythritol from CTP and 2-C-methyl-D-erythritol 4-phosphate (MEP). The chain is 2-C-methyl-D-erythritol 4-phosphate cytidylyltransferase from Clostridium kluyveri (strain NBRC 12016).